We begin with the raw amino-acid sequence, 540 residues long: MTTSLQDGQSAASRAAARDSPLAAQVCGAAQGRGDAHDLAPAPWLHARALLPLPDGTRGCAADRRKKKDLDVPEMPSIPNPFPELCCSPFTSVLSADLFPKANSRKKQVIKVYSEDETSRALDVPSDITARDVCQLLILKNHYIDDHSWTLFEHLPHIGVERTIEDHELVIEVLSNWGIEEENKLYFRKNYAKYEFFKNPMYFFPEHMVSFATETNGEISPTQILQMFLSSSTYPEIHGFLHAKEQGKKSWKKIYFFLRRSGLYFSTKGTSKEPRHLQFFSEFGNSDIYVSLAGKKKHGAPTNYGFCFKPNKAGGPRDLKMLCAEEEQSRTCWVTAIRLLKYGMQLYQNYMHPYQGRSGCSSQSISPMRSISENSLVAMDFSGQKSRVIENPTEALSVAVEEGLAWRKKGCLRLGTHGSPTASSQSSATNMAIHRSQPWFHHKISRDEAQRLIIQQGLVDGVFLVRDSQSNPKTFVLSMSHGQKIKHFQIIPVEDDGEMFHTLDDGHTRFTDLIQLVEFYQLNKGVLPCKLKHYCARIAL.

Position 2 is an N-acetylthreonine (Thr-2). Gln-9 bears the Phosphothreonine mark. One can recognise a Ras-associating domain in the interval 106 to 192; sequence KKQVIKVYSE…NKLYFRKNYA (87 aa). The region spanning 234-342 is the PH domain; the sequence is YPEIHGFLHA…WVTAIRLLKY (109 aa). Ser-372 and Ser-375 each carry phosphoserine. Positions 439–535 constitute an SH2 domain; it reads WFHHKISRDE…VLPCKLKHYC (97 aa).

The protein belongs to the GRB7/10/14 family. As to quaternary structure, interacts with the cytoplasmic domain of the autophosphorylated insulin receptor (INSR), through the SH2 domain. Interacts with GRB14 (via BPS domain); this interaction protects the tyrosines in the activation loop on INSR from dephosphorylation. Binds to the ankyrin repeat region of TNKS2 via its N-terminus. Interacts with activated NRAS. Interacts (via SH2 domain) with TEK/TIE2 (tyrosine phosphorylated). In terms of processing, phosphorylated on serine residues. Phosphorylated on tyrosine residues by TEK/TIE2. As to expression, expressed at high levels in the liver, kidney, pancreas, testis, ovary, heart and skeletal muscle.

Its subcellular location is the cytoplasm. It is found in the endosome membrane. Functionally, adapter protein which modulates coupling of cell surface receptor kinases with specific signaling pathways. Binds to, and suppresses signals from, the activated insulin receptor (INSR). Potent inhibitor of insulin-stimulated MAPK3 phosphorylation. Plays a critical role regulating PDPK1 membrane translocation in response to insulin stimulation and serves as an adapter protein to recruit PDPK1 to activated insulin receptor, thus promoting PKB/AKT1 phosphorylation and transduction of the insulin signal. This chain is Growth factor receptor-bound protein 14 (GRB14), found in Homo sapiens (Human).